The primary structure comprises 860 residues: Late endosome and vacuole interface protein 11 (860 aa).

The interval 19-45 is disordered; sequence EIINNSDHSSSHSTSHEEEDEEEDDTE. Low complexity predominate over residues 20–31; it reads IINNSDHSSSHS. Over residues 35-45 the composition is skewed to acidic residues; the sequence is EEEDEEEDDTE. A BED-type zinc finger spans residues 84 to 138; it reads KNIAKFWSHFLAIEKKLTKVKCKHCGEILTRSDASLTKTFRSHLKTKHNISANKN. Residues cysteine 105, cysteine 108, histidine 126, and histidine 131 each contribute to the Zn(2+) site.

The protein belongs to the VID22 family.

It is found in the nucleus. Functionally, involved in vacuolar processing and morphology. This is Late endosome and vacuole interface protein 11 (ENV11) from Saccharomyces cerevisiae (strain ATCC 204508 / S288c) (Baker's yeast).